Consider the following 121-residue polypeptide: Large ribosomal subunit protein uL18 (121 aa).

It belongs to the universal ribosomal protein uL18 family. Part of the 50S ribosomal subunit; part of the 5S rRNA/L5/L18/L25 subcomplex. Contacts the 5S and 23S rRNAs.

This is one of the proteins that bind and probably mediate the attachment of the 5S RNA into the large ribosomal subunit, where it forms part of the central protuberance. In Anaplasma phagocytophilum (strain HZ), this protein is Large ribosomal subunit protein uL18.